Reading from the N-terminus, the 375-residue chain is tRNA-specific 2-thiouridylase MnmA (375 aa).

Residues 8-15 and methionine 34 each bind ATP; that span reads GLSGGVDS. The interaction with target base in tRNA stretch occupies residues 104–106; that stretch reads NPD. Cysteine 109 serves as the catalytic Nucleophile. Residues cysteine 109 and cysteine 208 are joined by a disulfide bond. Residue glycine 134 coordinates ATP. An interaction with tRNA region spans residues 158-160; sequence KDQ. Cysteine 208 serves as the catalytic Cysteine persulfide intermediate. The interaction with tRNA stretch occupies residues 321–322; that stretch reads RY.

It belongs to the MnmA/TRMU family.

The protein localises to the cytoplasm. It carries out the reaction S-sulfanyl-L-cysteinyl-[protein] + uridine(34) in tRNA + AH2 + ATP = 2-thiouridine(34) in tRNA + L-cysteinyl-[protein] + A + AMP + diphosphate + H(+). Catalyzes the 2-thiolation of uridine at the wobble position (U34) of tRNA, leading to the formation of s(2)U34. This chain is tRNA-specific 2-thiouridylase MnmA, found in Mycoplasma mycoides subsp. mycoides SC (strain CCUG 32753 / NCTC 10114 / PG1).